The primary structure comprises 896 residues: Protein translocase subunit SecA (896 aa).

Residues Gln-87, 105 to 109, and Asp-507 contribute to the ATP site; that span reads GEGKT. Residues 853–879 form a disordered region; it reads ESLSENDEASETQTFRRQEKKIGRNDP. Residues 866-876 show a composition bias toward basic and acidic residues; the sequence is TFRRQEKKIGR. Zn(2+)-binding residues include Cys-880, Cys-882, Cys-891, and His-892.

It belongs to the SecA family. In terms of assembly, monomer and homodimer. Part of the essential Sec protein translocation apparatus which comprises SecA, SecYEG and auxiliary proteins SecDF-YajC and YidC. Zn(2+) is required as a cofactor.

The protein localises to the cell inner membrane. Its subcellular location is the cytoplasm. It carries out the reaction ATP + H2O + cellular proteinSide 1 = ADP + phosphate + cellular proteinSide 2.. Its function is as follows. Part of the Sec protein translocase complex. Interacts with the SecYEG preprotein conducting channel. Has a central role in coupling the hydrolysis of ATP to the transfer of proteins into and across the cell membrane, serving both as a receptor for the preprotein-SecB complex and as an ATP-driven molecular motor driving the stepwise translocation of polypeptide chains across the membrane. The chain is Protein translocase subunit SecA from Legionella pneumophila subsp. pneumophila (strain Philadelphia 1 / ATCC 33152 / DSM 7513).